We begin with the raw amino-acid sequence, 41 residues long: Cytochrome b559 subunit beta (41 aa).

A helical membrane pass occupies residues W16–A32. Heme is bound at residue H20.

The protein belongs to the PsbE/PsbF family. As to quaternary structure, heterodimer of an alpha subunit and a beta subunit. PSII is composed of 1 copy each of membrane proteins PsbA, PsbB, PsbC, PsbD, PsbE, PsbF, PsbH, PsbI, PsbJ, PsbK, PsbL, PsbM, PsbT, PsbX, PsbY, PsbZ, Psb30/Ycf12, at least 3 peripheral proteins of the oxygen-evolving complex and a large number of cofactors. It forms dimeric complexes. The cofactor is heme b.

The protein localises to the plastid. Its subcellular location is the chloroplast thylakoid membrane. This b-type cytochrome is tightly associated with the reaction center of photosystem II (PSII). PSII is a light-driven water:plastoquinone oxidoreductase that uses light energy to abstract electrons from H(2)O, generating O(2) and a proton gradient subsequently used for ATP formation. It consists of a core antenna complex that captures photons, and an electron transfer chain that converts photonic excitation into a charge separation. This Chlorella vulgaris (Green alga) protein is Cytochrome b559 subunit beta.